We begin with the raw amino-acid sequence, 89 residues long: MAVSKERKNEIIKEYATHEGDTGSVEVQVAVLTEDINNLTQHMREHSHDHHSYVGLLKKIGHRRNLLRYLQENDLERYRALIARLGLRR.

Belongs to the universal ribosomal protein uS15 family. In terms of assembly, part of the 30S ribosomal subunit. Forms a bridge to the 50S subunit in the 70S ribosome, contacting the 23S rRNA.

One of the primary rRNA binding proteins, it binds directly to 16S rRNA where it helps nucleate assembly of the platform of the 30S subunit by binding and bridging several RNA helices of the 16S rRNA. Its function is as follows. Forms an intersubunit bridge (bridge B4) with the 23S rRNA of the 50S subunit in the ribosome. This is Small ribosomal subunit protein uS15 from Lactobacillus delbrueckii subsp. bulgaricus (strain ATCC 11842 / DSM 20081 / BCRC 10696 / JCM 1002 / NBRC 13953 / NCIMB 11778 / NCTC 12712 / WDCM 00102 / Lb 14).